A 1439-amino-acid polypeptide reads, in one-letter code: DNA-directed RNA polymerase subunit beta' (1439 aa).

4 residues coordinate Zn(2+): Cys70, Cys72, Cys85, and Cys88. Mg(2+)-binding residues include Asp504, Asp506, and Asp508. Cys862, Cys936, Cys943, and Cys946 together coordinate Zn(2+).

Belongs to the RNA polymerase beta' chain family. In terms of assembly, the RNAP catalytic core consists of 2 alpha, 1 beta, 1 beta' and 1 omega subunit. When a sigma factor is associated with the core the holoenzyme is formed, which can initiate transcription. It depends on Mg(2+) as a cofactor. The cofactor is Zn(2+).

It carries out the reaction RNA(n) + a ribonucleoside 5'-triphosphate = RNA(n+1) + diphosphate. Functionally, DNA-dependent RNA polymerase catalyzes the transcription of DNA into RNA using the four ribonucleoside triphosphates as substrates. This chain is DNA-directed RNA polymerase subunit beta', found in Gluconobacter oxydans (strain 621H) (Gluconobacter suboxydans).